Consider the following 167-residue polypeptide: Endoribonuclease YbeY (167 aa).

Zn(2+)-binding residues include histidine 131, histidine 135, and histidine 141.

This sequence belongs to the endoribonuclease YbeY family. The cofactor is Zn(2+).

The protein resides in the cytoplasm. Single strand-specific metallo-endoribonuclease involved in late-stage 70S ribosome quality control and in maturation of the 3' terminus of the 16S rRNA. The protein is Endoribonuclease YbeY of Rickettsia prowazekii (strain Madrid E).